A 548-amino-acid polypeptide reads, in one-letter code: Membrane-associated tyrosine- and threonine-specific cdc2-inhibitory kinase (548 aa).

Residues 61–89 (PNKQRSWSQPRPQSVSFRSPQNKTPASKL) are disordered. Residues 63–85 (KQRSWSQPRPQSVSFRSPQNKTP) show a composition bias toward polar residues. The region spanning 103–353 (FKSICKLGRG…VDWLLSLPAI (251 aa)) is the Protein kinase domain. ATP-binding positions include 109–117 (LGRGSFGEV) and Lys132. Asp226 (proton acceptor) is an active-site residue. The Mg(2+) site is built by Asn231, Asp244, and Gly246. Positions 376–392 (VYQFIVWLLSFVFQWLN) match the Membrane-association motif motif. Residues 464–523 (SPDLLSRPSLGSTSTPRNLSPEFSMRKRSALPLTPNVSRISQDSTGKSRSPSTSHSSSGF) form a disordered region. Over residues 472-481 (SLGSTSTPRN) the composition is skewed to polar residues. At Thr478 the chain carries Phosphothreonine; by CDK1. A compositionally biased stretch (low complexity) spans 507 to 521 (STGKSRSPSTSHSSS).

Belongs to the protein kinase superfamily. Ser/Thr protein kinase family. WEE1 subfamily. In terms of assembly, interacts with CDC2-CCNB1 complex. Interacts with Mos during oocyte maturation. In terms of processing, autophosphorylated. Phosphorylated on undefined residues by RSK2 and Mos kinases. Phosphorylation at Thr-478 by cdk1 creates a docking site for plk1/plx1, leading to subsequent phosphorylation by plk1/plk1 and inhibition of the protein kinase activity kinase activity.

The protein resides in the endoplasmic reticulum membrane. The protein localises to the golgi apparatus membrane. It carries out the reaction L-seryl-[protein] + ATP = O-phospho-L-seryl-[protein] + ADP + H(+). It catalyses the reaction L-threonyl-[protein] + ATP = O-phospho-L-threonyl-[protein] + ADP + H(+). Its activity is regulated as follows. Negatively regulated by hyperphosphorylation during mitosis. The plk1/plk1 protein kinase may be required for mitotic phosphorylation. Inactivated during oocyte maturation by phosphorylation by RSK2 and Mos kinase. Acts as a negative regulator of entry into mitosis (G2 to M transition) by phosphorylation of the CDK1 kinase specifically when CDK1 is complexed to cyclins. Mediates phosphorylation of CDK1 predominantly on 'Thr-14'. Also involved in Golgi fragmentation. May be involved in phosphorylation of CDK1 on 'Tyr-15' to a lesser degree, however tyrosine kinase activity is unclear and may be indirect. The sequence is that of Membrane-associated tyrosine- and threonine-specific cdc2-inhibitory kinase (pkmyt1) from Xenopus laevis (African clawed frog).